The following is a 219-amino-acid chain: NADH-ubiquinone oxidoreductase 23 kDa subunit, mitochondrial (219 aa).

4Fe-4S ferredoxin-type domains lie at 111–140 (RRYP…IEAE) and 150–179 (TRYD…ESPN). The [4Fe-4S] cluster site is built by cysteine 120, cysteine 123, cysteine 126, cysteine 130, cysteine 159, cysteine 162, cysteine 165, and cysteine 169.

It belongs to the complex I 23 kDa subunit family. Complex I is composed of about 40 different subunits. It depends on [4Fe-4S] cluster as a cofactor.

It localises to the mitochondrion. It catalyses the reaction a ubiquinone + NADH + 5 H(+)(in) = a ubiquinol + NAD(+) + 4 H(+)(out). Core subunit of the mitochondrial membrane respiratory chain NADH dehydrogenase (Complex I) that is believed to belong to the minimal assembly required for catalysis. Complex I functions in the transfer of electrons from NADH to the respiratory chain. The immediate electron acceptor for the enzyme is believed to be ubiquinone. May donate electrons to ubiquinone. This Neurospora crassa (strain ATCC 24698 / 74-OR23-1A / CBS 708.71 / DSM 1257 / FGSC 987) protein is NADH-ubiquinone oxidoreductase 23 kDa subunit, mitochondrial (nuo21.3c).